Here is a 266-residue protein sequence, read N- to C-terminus: Glutaconate CoA-transferase subunit B (266 aa).

Glu-54 is a catalytic residue.

The protein belongs to the 3-oxoacid CoA-transferase subunit B family. In terms of assembly, heterooctamer of four A and four B subunits.

The protein resides in the cytoplasm. The catalysed reaction is trans-glutaconate + acetyl-CoA = (2E)-glutaconyl-CoA + acetate. It participates in amino-acid degradation; L-glutamate degradation via hydroxyglutarate pathway; crotonoyl-CoA from L-glutamate: step 3/5. In terms of biological role, catalyzes the transfer of the CoA moiety from acetyl-CoA to (R)-2-hydroxyglutarate and related compounds like glutaconate. The sequence is that of Glutaconate CoA-transferase subunit B (gctB) from Acidaminococcus fermentans (strain ATCC 25085 / DSM 20731 / CCUG 9996 / CIP 106432 / VR4).